The primary structure comprises 245 residues: Ureidoacrylate amidohydrolase RutB (245 aa).

The active-site Proton acceptor is Asp41. Residue Lys150 is part of the active site. The Nucleophile role is filled by Cys183.

This sequence belongs to the isochorismatase family. RutB subfamily.

It catalyses the reaction (Z)-3-ureidoacrylate + H2O + H(+) = (Z)-3-aminoacrylate + NH4(+) + CO2. The catalysed reaction is (Z)-3-ureidoacrylate + H2O = (Z)-3-aminoacrylate + carbamate + H(+). The enzyme catalyses (Z)-2-methylureidoacrylate + H2O + H(+) = (Z)-2-methylaminoacrylate + NH4(+) + CO2. In terms of biological role, hydrolyzes ureidoacrylate to form aminoacrylate and carbamate. The carbamate hydrolyzes spontaneously, thereby releasing one of the nitrogen atoms of the pyrimidine ring as ammonia and one of its carbon atoms as CO2. The sequence is that of Ureidoacrylate amidohydrolase RutB from Pseudomonas syringae pv. syringae (strain B728a).